Here is a 153-residue protein sequence, read N- to C-terminus: Aspartate carbamoyltransferase regulatory chain (153 aa).

4 residues coordinate Zn(2+): C108, C113, C137, and C140.

The protein belongs to the PyrI family. In terms of assembly, contains catalytic and regulatory chains. It depends on Zn(2+) as a cofactor.

In terms of biological role, involved in allosteric regulation of aspartate carbamoyltransferase. The protein is Aspartate carbamoyltransferase regulatory chain of Methanosphaera stadtmanae (strain ATCC 43021 / DSM 3091 / JCM 11832 / MCB-3).